The primary structure comprises 366 residues: MAIISSKKQPPEPNGQPNKRPESAPAAPKEKVLQPEAAIDEQGKQEESIRPQKFADYIGQKDLKDVLDIAIKAAKSRGEVLDHLLLYGPPGLGKTTMAMILASEMGVNYKITSAPALERPRDIVGLLVNLKPGDILFIDEIHRLSRMTEEILYPAMEDYRLDITVGKGSSARIRSIPLSKFTLVGATTRVGALTSPLRDRFGLIQKLRFYEVDELSQIVLRSAQLLQTQVTDDGATEIARRSRGTPRIANRLLKRVRDYAQVKSCTEVSQNIAAEALQLFQVDPCGLDWTDRRMLSVIIEQFNGGPVGLETIAAATGEDTQTIEEVYEPYLMQIGYLSRTPRGRTATKAAYKHMGFTPPNEQLSLL.

A disordered region spans residues 1-49 (MAIISSKKQPPEPNGQPNKRPESAPAAPKEKVLQPEAAIDEQGKQEESI). The segment at 13–210 (PNGQPNKRPE…FGLIQKLRFY (198 aa)) is large ATPase domain (RuvB-L). ATP is bound by residues isoleucine 49, arginine 50, glycine 91, lysine 94, threonine 95, threonine 96, 157–159 (EDY), arginine 200, tyrosine 210, and arginine 247. A Mg(2+)-binding site is contributed by threonine 95. A small ATPAse domain (RuvB-S) region spans residues 211–281 (EVDELSQIVL…IAAEALQLFQ (71 aa)). The interval 284–366 (PCGLDWTDRR…TPPNEQLSLL (83 aa)) is head domain (RuvB-H). Positions 339 and 344 each coordinate DNA.

It belongs to the RuvB family. Homohexamer. Forms an RuvA(8)-RuvB(12)-Holliday junction (HJ) complex. HJ DNA is sandwiched between 2 RuvA tetramers; dsDNA enters through RuvA and exits via RuvB. An RuvB hexamer assembles on each DNA strand where it exits the tetramer. Each RuvB hexamer is contacted by two RuvA subunits (via domain III) on 2 adjacent RuvB subunits; this complex drives branch migration. In the full resolvosome a probable DNA-RuvA(4)-RuvB(12)-RuvC(2) complex forms which resolves the HJ.

The protein resides in the cytoplasm. It carries out the reaction ATP + H2O = ADP + phosphate + H(+). The RuvA-RuvB-RuvC complex processes Holliday junction (HJ) DNA during genetic recombination and DNA repair, while the RuvA-RuvB complex plays an important role in the rescue of blocked DNA replication forks via replication fork reversal (RFR). RuvA specifically binds to HJ cruciform DNA, conferring on it an open structure. The RuvB hexamer acts as an ATP-dependent pump, pulling dsDNA into and through the RuvAB complex. RuvB forms 2 homohexamers on either side of HJ DNA bound by 1 or 2 RuvA tetramers; 4 subunits per hexamer contact DNA at a time. Coordinated motions by a converter formed by DNA-disengaged RuvB subunits stimulates ATP hydrolysis and nucleotide exchange. Immobilization of the converter enables RuvB to convert the ATP-contained energy into a lever motion, pulling 2 nucleotides of DNA out of the RuvA tetramer per ATP hydrolyzed, thus driving DNA branch migration. The RuvB motors rotate together with the DNA substrate, which together with the progressing nucleotide cycle form the mechanistic basis for DNA recombination by continuous HJ branch migration. Branch migration allows RuvC to scan DNA until it finds its consensus sequence, where it cleaves and resolves cruciform DNA. This chain is Holliday junction branch migration complex subunit RuvB, found in Trichormus variabilis (strain ATCC 29413 / PCC 7937) (Anabaena variabilis).